Here is a 1081-residue protein sequence, read N- to C-terminus: DNA polymerase catalytic subunit (1081 aa).

It belongs to the DNA polymerase type-B family. Forms a complex with the ssDNA-binding protein UL29, the DNA polymerase processivity factor, and the alkaline exonuclease. Interacts with the putative helicase-primase complex subunit UL8; this interaction may coordinate leading and lagging strand DNA synthesis at the replication fork.

It is found in the host nucleus. The catalysed reaction is DNA(n) + a 2'-deoxyribonucleoside 5'-triphosphate = DNA(n+1) + diphosphate. The enzyme catalyses Endonucleolytic cleavage to 5'-phosphomonoester.. Replicates viral genomic DNA. The replication complex is composed of six viral proteins: the DNA polymerase, processivity factor, primase, primase-associated factor, helicase, and ssDNA-binding protein. Additionally, the polymerase contains an intrinsic ribonuclease H (RNase H) activity that specifically degrades RNA/DNA heteroduplexes or duplex DNA substrates in the 5' to 3' direction. Therefore, it can catalyze the excision of the RNA primers that initiate the synthesis of Okazaki fragments at a replication fork during viral DNA replication. The chain is DNA polymerase catalytic subunit (UL30) from Psittacid herpesvirus 1 (isolate Amazon parrot/-/97-0001/1997) (PsHV-1).